The sequence spans 475 residues: Ribulose bisphosphate carboxylase large chain (475 aa).

The propeptide occupies 1–2 (MS). P3 carries the post-translational modification N-acetylproline. An N6,N6,N6-trimethyllysine modification is found at K14. N123 and T173 together coordinate substrate. The active-site Proton acceptor is K175. Residue K177 participates in substrate binding. K201, D203, and E204 together coordinate Mg(2+). K201 is subject to N6-carboxylysine. H294 (proton acceptor) is an active-site residue. Substrate contacts are provided by R295, H327, and S379.

This sequence belongs to the RuBisCO large chain family. Type I subfamily. As to quaternary structure, heterohexadecamer of 8 large chains and 8 small chains; disulfide-linked. The disulfide link is formed within the large subunit homodimers. Requires Mg(2+) as cofactor. Post-translationally, the disulfide bond which can form in the large chain dimeric partners within the hexadecamer appears to be associated with oxidative stress and protein turnover.

The protein resides in the plastid. It is found in the chloroplast. The catalysed reaction is 2 (2R)-3-phosphoglycerate + 2 H(+) = D-ribulose 1,5-bisphosphate + CO2 + H2O. It catalyses the reaction D-ribulose 1,5-bisphosphate + O2 = 2-phosphoglycolate + (2R)-3-phosphoglycerate + 2 H(+). RuBisCO catalyzes two reactions: the carboxylation of D-ribulose 1,5-bisphosphate, the primary event in carbon dioxide fixation, as well as the oxidative fragmentation of the pentose substrate in the photorespiration process. Both reactions occur simultaneously and in competition at the same active site. The protein is Ribulose bisphosphate carboxylase large chain of Nandina domestica (Heavenly bamboo).